We begin with the raw amino-acid sequence, 111 residues long: Irditoxin subunit B (111 aa).

An N-terminal signal peptide occupies residues 1–19; the sequence is MKTLLLAVAVVAFVCLGSA. Positions 20 to 34 are excised as a propeptide; that stretch reads DQLGLGRQQIDWGKG. Position 35 is a pyrrolidone carboxylic acid (Gln35). Intrachain disulfides connect Cys44–Cys68, Cys47–Cys55, Cys61–Cys87, Cys91–Cys102, and Cys103–Cys108.

It belongs to the three-finger toxin family. Ancestral subfamily. Boigatoxin sub-subfamily. As to quaternary structure, heterodimer of A and B chains; disulfide-linked. In terms of tissue distribution, expressed by the venom gland.

It localises to the secreted. In terms of biological role, this bird and reptile-specific postsynaptic neurotoxin inhibits the chick muscle alpha-1-beta-1-gamma-delta (CHRNA1-CHRNB1-CHRNG-CHRND) nicotinic acetylcholine receptor (nAChR) 100-fold more compared with the mouse receptor. In vivo, produces rapid flaccid paralysis, dyspnea and increased respiratory rate in geckos. At sublethal doses geckos were immobilized for up to three days and then recovered. Chicks injected with lethal doses showed rapid onset of inactivity, dyspnea and neck droop, and no extended paralysis with survival was seen. In Boiga irregularis (Brown tree snake), this protein is Irditoxin subunit B.